The following is a 1538-amino-acid chain: MMRTAFSRISGMTAQQRTSLADEFDRVSRIAVAEPVAVVGIGCRFPGDVDGPESFWDFLVAGRNAISTVPADRWDAEAFYHPDPLTPGRMTTKWGGFVPDVAGFDAEFFGITPREAAAMDPQQRMLLEVAWEALEHAGIPPDSLGGTRTAVMMGVYFNEYQSMLAASPQNVDAYSGTGNAHSITVGRISYLLGLRGPAVAVDTACSSSLVAVHLACQSLRLRETDLALAGGVSITLRPETQIAISAWGLLSPQGRCAAFDAAADGFVRGEGAGVVVLKRLTDAVRDGDQVLAVVRGSAVNQDGRSNGVTAPNTAAQCDVIADALRSGDVAPDSVNYVEAHGTGTVLGDPIEFEALAATYGHGGDACALGAVKTNIGHLEAAAGIAGFIKATLAVQRATIPPNLHFSQWNPAIDAASTRFFVPTQNSPWPTAEGPRRAAVSSFGLGGTNAHVIIEQGSELAPVSEGGEDTGVSTLVVTGKTAQRMAATAQVLADWMEGPGAEVAVADVAHTVNHHRARQATFGTVVARDRAQAIAGLRALAAGQHAPGVVSHQDGSPGPGTVFVYSGRGSQWAGMGRQLLADEPAFAAAVAELEPVFVEQAGFSLRDVIATGKELVGIEQIQLGLIGMQLTLTELWRSYGVQPDLVIGHSMGEVAAAVVAGALTPAEGLRVTATRARLMAPLSGQGGMALLGLDAAATEALIADYPQVTVGIYNSPRQTVIAGPTEQIDELIARVRAQNRFASRVNIEVAPHNPAMDALQPAMRSELADLTPRTPTIGIISTTYADLHTQPIFDAEHWATNMRNPVRFQQAIASAGSGADGAYHTFIEISAHPLLTQAIADTLEDAHRPTKSAAKYLSIGTLQRDADDTVTFRTNLYTADIAHPPHTCHPPEPHPTIPTTPWQHTHHWIATTHPSTAAPEDPGSNKVVVNGQSTSESRALEDWCHQLAWPIRPAVSADPPSTAAWLVVADNELCHELARAADSRVDSLSPPALAAGSDPAALLDALRGVDNVLYAPPVPGELLDIESAYQVFHATRRLAAAMVASSATAISPPKLFIMTRNAQPISEGDRANPGHAVLWGLGRSLALEHPEIWGGIIDLDDSMPAELAVRHVLTAAHGTDGEDQVVYRSGARHVPRLQRRTLPGKPVTLNADASQLVIGATGNIGPHLIRQLARMGAKTIVAMARKPGALDELTQCLAATGTDLIAVAADATDPAAMQTLFDRFGTELPPLEGIYLAAFAGRPALLSEMTDDDVTTMFRPKLDALALLHRLSLKSPVRHFVLFSSVSGLLGSRWLAHYTATSAFLDSFAGARRTMGLPATVVDWGLWKSLADVQKDATQISAESGLQPMADEVAIGALPLVMNPDAAVATVVVAADWPLLAAAYRTRGALRIVDDLLPAPEDVGKGESEFRTSLRSCPAEKRRDMLFDHVGALAATVMGMPPTEPLDPSAGFFQLGMDSLMSVTLQRALSESLGEFLPASVVFDYPTVYSLTDYLATVLPELLEIGATAVATQQATDSYHELTEAELLEQLSERLRGTQ.

Positions 33–455 (AEPVAVVGIG…GTNAHVIIEQ (423 aa)) constitute a Ketosynthase family 3 (KS3) domain. Active-site for beta-ketoacyl synthase activity residues include C205, H340, and H377. The tract at residues 553 to 882 (DGSPGPGTVF…TNLYTADIAH (330 aa)) is acyltransferase. S649 acts as the For malonyltransferase activity in catalysis. NADP(+) is bound at residue 1153–1196 (SQLVIGATGNIGPHLIRQLARMGAKTIVAMARKPGALDELTQCL). A beta-ketoacyl reductase region spans residues 1153-1328 (SQLVIGATGN…TVVDWGLWKS (176 aa)). Residues 1423 to 1498 (DMLFDHVGAL…SLTDYLATVL (76 aa)) form the Carrier domain. At S1458 the chain carries O-(pantetheine 4'-phosphoryl)serine.

It depends on NADP(+) as a cofactor. Pantetheine 4'-phosphate serves as cofactor.

The enzyme catalyses icosanoyl-[(phenol)carboxyphthiodiolenone synthase] + 2 (S)-methylmalonyl-CoA + 3 malonyl-CoA + 5 NADPH + 10 H(+) = C32-carboxyphthiodiolenone-[(phenol)carboxyphthiodiolenone synthase] + 5 CO2 + 5 NADP(+) + 5 CoA + 2 H2O. It catalyses the reaction docosanoyl-[(phenol)carboxyphthiodiolenone synthase] + 2 (S)-methylmalonyl-CoA + 3 malonyl-CoA + 5 NADPH + 10 H(+) = C34-carboxyphthiodiolenone-[(phenol)carboxyphthiodiolenone synthase] + 5 CO2 + 5 NADP(+) + 5 CoA + 2 H2O. It carries out the reaction 17-(4-hydroxyphenyl)heptadecanoyl-[(phenol)carboxyphthiodiolenone synthase] + 2 (S)-methylmalonyl-CoA + 3 malonyl-CoA + 5 NADPH + 10 H(+) = C35-(phenol)carboxyphthiodiolenone-[(phenol)carboxyphthiodiolenone synthase] + 5 CO2 + 5 NADP(+) + 5 CoA + 2 H2O. The catalysed reaction is 19-(4-hydroxyphenyl)nonadecanoyl-[(phenol)carboxyphthiodiolenone synthase] + 2 (S)-methylmalonyl-CoA + 3 malonyl-CoA + 5 NADPH + 10 H(+) = C37-(phenol)carboxyphthiodiolenone-[(phenol)carboxyphthiodiolenone synthase] + 5 CO2 + 5 NADP(+) + 5 CoA + 2 H2O. It participates in lipid metabolism; fatty acid biosynthesis. In terms of biological role, part of the PpsABCDE complex involved in the biosynthesis of the lipid core common to phthiocerols and phenolphthiocerols by successive additions of malonyl-CoA or methylmalonyl-CoA extender units. PpsA can accept as substrate the activated forms of either icosanoyl (C20), docosanoyl (C22) or lignoceroyl (C24) groups from FadD26, or a (4-hydroxyphenyl)-C17 or (4-hydroxyphenyl)-C19 fatty acyl from FadD29. PpsA initiates the biosynthesis and extends its substrate using a malonyl-CoA extender unit. The PpsB and PpsC proteins add the second and third malonyl-CoA extender units. PpsD adds an (R)-methylmalonyl unit and PpsE adds a second (R)-methylmalonyl unit. The incorporation of the methylmalonyl units results in formation of two branched methyl groups in the elongated product. In Mycobacterium bovis (strain ATCC BAA-935 / AF2122/97), this protein is Phenolphthiocerol/phthiocerol polyketide synthase subunit B (ppsB).